The sequence spans 458 residues: Argininosuccinate lyase (458 aa).

Belongs to the lyase 1 family. Argininosuccinate lyase subfamily.

The protein resides in the cytoplasm. The enzyme catalyses 2-(N(omega)-L-arginino)succinate = fumarate + L-arginine. The protein operates within amino-acid biosynthesis; L-arginine biosynthesis; L-arginine from L-ornithine and carbamoyl phosphate: step 3/3. The polypeptide is Argininosuccinate lyase (Pelobacter propionicus (strain DSM 2379 / NBRC 103807 / OttBd1)).